A 180-amino-acid polypeptide reads, in one-letter code: tRNA (cytidine(56)-2'-O)-methyltransferase (180 aa).

S-adenosyl-L-methionine-binding positions include Leu83, 115 to 119 (GAEKV), and 133 to 140 (VGNQPHSE).

Belongs to the aTrm56 family. As to quaternary structure, homodimer.

The protein localises to the cytoplasm. It carries out the reaction cytidine(56) in tRNA + S-adenosyl-L-methionine = 2'-O-methylcytidine(56) in tRNA + S-adenosyl-L-homocysteine + H(+). In terms of biological role, specifically catalyzes the AdoMet-dependent 2'-O-ribose methylation of cytidine at position 56 in tRNAs. This is tRNA (cytidine(56)-2'-O)-methyltransferase from Methanococcus aeolicus (strain ATCC BAA-1280 / DSM 17508 / OCM 812 / Nankai-3).